The following is a 96-amino-acid chain: Co-chaperonin GroES (96 aa).

This sequence belongs to the GroES chaperonin family. Heptamer of 7 subunits arranged in a ring. Interacts with the chaperonin GroEL.

The protein resides in the cytoplasm. In terms of biological role, together with the chaperonin GroEL, plays an essential role in assisting protein folding. The GroEL-GroES system forms a nano-cage that allows encapsulation of the non-native substrate proteins and provides a physical environment optimized to promote and accelerate protein folding. GroES binds to the apical surface of the GroEL ring, thereby capping the opening of the GroEL channel. This is Co-chaperonin GroES from Vibrio atlanticus (strain LGP32) (Vibrio splendidus (strain Mel32)).